Here is a 396-residue protein sequence, read N- to C-terminus: Aspartate aminotransferase (396 aa).

Residues Gly-34, Trp-130, and Asn-183 each coordinate L-aspartate. Position 246 is an N6-(pyridoxal phosphate)lysine (Lys-246). Arg-374 contacts L-aspartate.

The protein belongs to the class-I pyridoxal-phosphate-dependent aminotransferase family. In terms of assembly, homodimer. Pyridoxal 5'-phosphate serves as cofactor.

The protein resides in the cytoplasm. It carries out the reaction L-aspartate + 2-oxoglutarate = oxaloacetate + L-glutamate. In Salmonella typhi, this protein is Aspartate aminotransferase (aspC).